A 659-amino-acid polypeptide reads, in one-letter code: Exoribonuclease 2 (659 aa).

The 344-residue stretch at 189–532 folds into the RNB domain; that stretch reads REDLTHLYFT…HRLIKQVLSN (344 aa). The region spanning 576-658 is the S1 motif domain; that stretch reads NVEFDGEIQD…ETRSVVGDVL (83 aa).

It belongs to the RNR ribonuclease family. RNase II subfamily.

Its subcellular location is the cytoplasm. It carries out the reaction Exonucleolytic cleavage in the 3'- to 5'-direction to yield nucleoside 5'-phosphates.. Involved in mRNA degradation. Hydrolyzes single-stranded polyribonucleotides processively in the 3' to 5' direction. The sequence is that of Exoribonuclease 2 from Glaesserella parasuis serovar 5 (strain SH0165) (Haemophilus parasuis).